A 352-amino-acid chain; its full sequence is UPF0324 membrane protein BCE_5279 (352 aa).

Helical transmembrane passes span 25 to 47, 52 to 71, 111 to 130, 140 to 162, 169 to 191, 201 to 223, 230 to 252, 267 to 289, 291 to 313, and 328 to 350; these read FGFS…LAEL, IMGQ…AAIG, VLVI…YGLT, GILT…APQV, TAVG…TLLY, YGVF…APGG, AVIV…GLWF, LPIP…GIIP, VVAG…GLGL, and FVAG…YALG.

It belongs to the UPF0324 family.

It is found in the cell membrane. The sequence is that of UPF0324 membrane protein BCE_5279 from Bacillus cereus (strain ATCC 10987 / NRS 248).